The sequence spans 361 residues: Ribosomal RNA large subunit methyltransferase M (361 aa).

Residues S187, 220–223, D239, D259, and D276 contribute to the S-adenosyl-L-methionine site; that span reads CPGG. Catalysis depends on K305, which acts as the Proton acceptor.

It belongs to the class I-like SAM-binding methyltransferase superfamily. RNA methyltransferase RlmE family. RlmM subfamily. As to quaternary structure, monomer.

The protein localises to the cytoplasm. It carries out the reaction cytidine(2498) in 23S rRNA + S-adenosyl-L-methionine = 2'-O-methylcytidine(2498) in 23S rRNA + S-adenosyl-L-homocysteine + H(+). Catalyzes the 2'-O-methylation at nucleotide C2498 in 23S rRNA. The polypeptide is Ribosomal RNA large subunit methyltransferase M (Shewanella sp. (strain MR-7)).